Here is a 117-residue protein sequence, read N- to C-terminus: 3',5'-cyclic-AMP phosphodiesterase 4A (117 aa).

A disordered region spans residues 42–79 (KQNEVEIPSPTMKDREPQEAPRQRPCQQLPPPVPHLQP). The segment covering 53 to 63 (MKDREPQEAPR) has biased composition (basic and acidic residues). The interval 78–117 (QPMSQITGVKRLSHNSGLNNASIPRFGVKTDQEELLAQEL) is catalytic.

Belongs to the cyclic nucleotide phosphodiesterase family. PDE4 subfamily. In terms of assembly, interacts with LYN (via SH3 domain). Interacts with ARRB2. It depends on Zn(2+) as a cofactor. Mg(2+) is required as a cofactor. The cofactor is Mn(2+). Proteolytically cleaved by CASP3.

It is found in the cytoplasm. It localises to the cytosol. The protein resides in the membrane. It carries out the reaction 3',5'-cyclic AMP + H2O = AMP + H(+). The protein operates within purine metabolism; 3',5'-cyclic AMP degradation; AMP from 3',5'-cyclic AMP: step 1/1. Its function is as follows. Hydrolyzes the second messenger 3',5'-cyclic AMP (cAMP), which is a key regulator of many important physiological processes. This is 3',5'-cyclic-AMP phosphodiesterase 4A (PDE4A) from Cavia porcellus (Guinea pig).